The following is a 51-amino-acid chain: Large ribosomal subunit protein bL33 (51 aa).

It belongs to the bacterial ribosomal protein bL33 family.

The sequence is that of Large ribosomal subunit protein bL33 from Francisella philomiragia subsp. philomiragia (strain ATCC 25017 / CCUG 19701 / FSC 153 / O#319-036).